We begin with the raw amino-acid sequence, 423 residues long: D-tagatose-1,6-bisphosphate aldolase subunit GatZ (423 aa).

It belongs to the GatZ/KbaZ family. GatZ subfamily. Forms a complex with GatY.

Its pathway is carbohydrate metabolism; D-tagatose 6-phosphate degradation; D-glyceraldehyde 3-phosphate and glycerone phosphate from D-tagatose 6-phosphate: step 2/2. In terms of biological role, component of the tagatose-1,6-bisphosphate aldolase GatYZ that is required for full activity and stability of the Y subunit. Could have a chaperone-like function for the proper and stable folding of GatY. When expressed alone, GatZ does not show any aldolase activity. Is involved in the catabolism of galactitol. The polypeptide is D-tagatose-1,6-bisphosphate aldolase subunit GatZ (Salmonella agona (strain SL483)).